The following is a 340-amino-acid chain: Phosphoribosylformylglycinamidine cyclo-ligase (340 aa).

Belongs to the AIR synthase family.

It localises to the cytoplasm. It catalyses the reaction 2-formamido-N(1)-(5-O-phospho-beta-D-ribosyl)acetamidine + ATP = 5-amino-1-(5-phospho-beta-D-ribosyl)imidazole + ADP + phosphate + H(+). It participates in purine metabolism; IMP biosynthesis via de novo pathway; 5-amino-1-(5-phospho-D-ribosyl)imidazole from N(2)-formyl-N(1)-(5-phospho-D-ribosyl)glycinamide: step 2/2. The protein is Phosphoribosylformylglycinamidine cyclo-ligase of Acetivibrio thermocellus (strain ATCC 27405 / DSM 1237 / JCM 9322 / NBRC 103400 / NCIMB 10682 / NRRL B-4536 / VPI 7372) (Clostridium thermocellum).